The primary structure comprises 133 residues: MRTVSMAALVVIAAALAWTSSAELASAPAPGEGPCGKVVHHIMPCLKFVKGEEKEPSKSCCSGTKKLSEEVKTTEQKREACKCIVAATKGISGIKNELVAEVPKKCGITTTLPPITADFDCSKIESTIFRGYY.

A signal peptide spans 1–31; sequence MRTVSMAALVVIAAALAWTSSAELASAPAPG. 4 disulfides stabilise this stretch: C35/C83, C45/C60, C61/C106, and C81/C121.

It belongs to the plant LTP family.

Functionally, plant non-specific lipid-transfer proteins transfer phospholipids as well as galactolipids across membranes. May play a role in wax or cutin deposition in the cell walls of expanding epidermal cells and certain secretory tissues. This chain is Probable non-specific lipid-transfer protein 2, found in Parietaria judaica (Pellitory-of-the-wall).